The chain runs to 198 residues: RNA pyrophosphohydrolase (198 aa).

Residues 6–149 (GYRPNVGIVI…KKEVYRKAMK (144 aa)) form the Nudix hydrolase domain. The Nudix box motif lies at 38-59 (GGINDNESAEQAMYRELFEEVG).

It belongs to the Nudix hydrolase family. RppH subfamily. It depends on a divalent metal cation as a cofactor.

Its function is as follows. Accelerates the degradation of transcripts by removing pyrophosphate from the 5'-end of triphosphorylated RNA, leading to a more labile monophosphorylated state that can stimulate subsequent ribonuclease cleavage. The protein is RNA pyrophosphohydrolase of Pasteurella multocida (strain Pm70).